A 431-amino-acid polypeptide reads, in one-letter code: Phosphate regulon sensor protein PhoR (431 aa).

The Cytoplasmic segment spans residues 1 to 9 (MLERLSWKR). The helical transmembrane segment at 10 to 28 (LVLELLLCCLPAFILGAFF) threads the bilayer. The Periplasmic portion of the chain corresponds to 29–32 (GYLP). The chain crosses the membrane as a helical span at residues 33-51 (WFLLASVTGLLIWHFWNLL). The Cytoplasmic portion of the chain corresponds to 52–431 (RLSWWLWVDR…PERLIAKNSD (380 aa)). In terms of domain architecture, PAS spans 96 to 172 (LIKRFRSGAE…RPLNLVLNTG (77 aa)). A Histidine kinase domain is found at 210–425 (NVSHELRTPL…RFSFVIPERL (216 aa)). Histidine 213 carries the post-translational modification Phosphohistidine; by autocatalysis.

The protein resides in the cell inner membrane. The catalysed reaction is ATP + protein L-histidine = ADP + protein N-phospho-L-histidine.. Its function is as follows. Member of the two-component regulatory system PhoR/PhoB involved in the phosphate regulon genes expression. PhoR may function as a membrane-associated protein kinase that phosphorylates PhoB in response to environmental signals. The sequence is that of Phosphate regulon sensor protein PhoR (phoR) from Escherichia coli (strain K12).